An 84-amino-acid polypeptide reads, in one-letter code: uncharacterized protein (84 aa).

This is an uncharacterized protein from Helicobacter pylori (strain ATCC 700392 / 26695) (Campylobacter pylori).